A 389-amino-acid chain; its full sequence is GDSL esterase/lipase At1g28570 (389 aa).

The first 25 residues, 1–25 (MATLFMKLVSFFLILSTFCLTTVNS), serve as a signal peptide directing secretion. S41 serves as the catalytic Nucleophile. N137 and N319 each carry an N-linked (GlcNAc...) asparagine glycan. Catalysis depends on residues D344 and H347.

The protein belongs to the 'GDSL' lipolytic enzyme family.

It is found in the secreted. The protein is GDSL esterase/lipase At1g28570 of Arabidopsis thaliana (Mouse-ear cress).